The primary structure comprises 235 residues: MLTRKQHELLMFIHERIKESGVSPSFDEMKEALDLASKSGIHRLITALEERGFIRRLAHRARALEVVKLPQQATTAAPPKGRGAFRPQVLEGGGQAPTTSAQPQMAADNSRELPILGRIAAGTPIDAIQHERERLPVPESMLGAGEHYVLEVQGDSMIEAGILDGDYVIIKKGDTANSGEIVVALVGEEATLKRLRKKGGSIALEAANPKYETRIFGPDQVEVQGKLVGLIRRYH.

The segment at residues 26 to 46 (FDEMKEALDLASKSGIHRLIT) is a DNA-binding region (H-T-H motif). Residues 72-104 (QATTAAPPKGRGAFRPQVLEGGGQAPTTSAQPQ) are disordered. Catalysis depends on for autocatalytic cleavage activity residues Ser156 and Lys193.

The protein belongs to the peptidase S24 family. In terms of assembly, homodimer.

It catalyses the reaction Hydrolysis of Ala-|-Gly bond in repressor LexA.. In terms of biological role, represses a number of genes involved in the response to DNA damage (SOS response), including recA and lexA. In the presence of single-stranded DNA, RecA interacts with LexA causing an autocatalytic cleavage which disrupts the DNA-binding part of LexA, leading to derepression of the SOS regulon and eventually DNA repair. This chain is LexA repressor, found in Caulobacter sp. (strain K31).